The following is a 209-amino-acid chain: Large ribosomal subunit protein uL3 (209 aa).

Residues 130–154 form a disordered region; sequence RGPMSHGSKFHRAVGSMGASSDPSR.

Belongs to the universal ribosomal protein uL3 family. In terms of assembly, part of the 50S ribosomal subunit. Forms a cluster with proteins L14 and L19.

Its function is as follows. One of the primary rRNA binding proteins, it binds directly near the 3'-end of the 23S rRNA, where it nucleates assembly of the 50S subunit. This is Large ribosomal subunit protein uL3 from Clostridium kluyveri (strain NBRC 12016).